Consider the following 205-residue polypeptide: Large ribosomal subunit protein uL4 (205 aa).

The protein belongs to the universal ribosomal protein uL4 family. Part of the 50S ribosomal subunit. Contacts proteins L15 and L34.

Functionally, one of the primary rRNA binding proteins, this protein initially binds near the 5'-end of the 23S rRNA. It is important during the early stages of 50S assembly. Its function is as follows. Makes multiple contacts with different domains of the 23S rRNA in the assembled 50S subunit. This protein is located close to the polypeptide exit tunnel, and interacts with the modified macrolide azithromycin, which blocks the tunnel. This is Large ribosomal subunit protein uL4 (rplD) from Deinococcus radiodurans (strain ATCC 13939 / DSM 20539 / JCM 16871 / CCUG 27074 / LMG 4051 / NBRC 15346 / NCIMB 9279 / VKM B-1422 / R1).